We begin with the raw amino-acid sequence, 264 residues long: ATP synthase subunit a (264 aa).

6 helical membrane passes run 27–47 (VHLD…FVFS), 87–107 (VGPL…IDLI), 131–151 (DISG…FYTI), 172–192 (LLIP…PVSL), 196–216 (LFGN…MYMA), and 230–250 (LAWA…FMML).

The protein belongs to the ATPase A chain family. As to quaternary structure, F-type ATPases have 2 components, CF(1) - the catalytic core - and CF(0) - the membrane proton channel. CF(1) has five subunits: alpha(3), beta(3), gamma(1), delta(1), epsilon(1). CF(0) has three main subunits: a(1), b(2) and c(9-12). The alpha and beta chains form an alternating ring which encloses part of the gamma chain. CF(1) is attached to CF(0) by a central stalk formed by the gamma and epsilon chains, while a peripheral stalk is formed by the delta and b chains.

It is found in the cell inner membrane. Key component of the proton channel; it plays a direct role in the translocation of protons across the membrane. This Pasteurella multocida (strain Pm70) protein is ATP synthase subunit a.